A 283-amino-acid polypeptide reads, in one-letter code: Protein/nucleic acid deglycase HchA (283 aa).

The Zn(2+) site is built by histidine 86, glutamate 91, and histidine 123. Cysteine 185 acts as the Nucleophile in catalysis.

Belongs to the peptidase C56 family. HchA subfamily. In terms of assembly, homodimer.

It is found in the cytoplasm. It catalyses the reaction N(omega)-(1-hydroxy-2-oxopropyl)-L-arginyl-[protein] + H2O = lactate + L-arginyl-[protein] + H(+). It carries out the reaction N(6)-(1-hydroxy-2-oxopropyl)-L-lysyl-[protein] + H2O = lactate + L-lysyl-[protein] + H(+). The enzyme catalyses S-(1-hydroxy-2-oxopropyl)-L-cysteinyl-[protein] + H2O = lactate + L-cysteinyl-[protein] + H(+). The catalysed reaction is N(omega)-(1-hydroxy-2-oxoethyl)-L-arginyl-[protein] + H2O = L-arginyl-[protein] + glycolate + H(+). It catalyses the reaction N(6)-(1-hydroxy-2-oxoethyl)-L-lysyl-[protein] + H2O = glycolate + L-lysyl-[protein] + H(+). It carries out the reaction S-(1-hydroxy-2-oxoethyl)-L-cysteinyl-[protein] + H2O = glycolate + L-cysteinyl-[protein] + H(+). The enzyme catalyses N(2)-(1-hydroxy-2-oxopropyl)-dGTP + H2O = lactate + dGTP + H(+). The catalysed reaction is N(2)-(1-hydroxy-2-oxopropyl)-GTP + H2O = lactate + GTP + H(+). It catalyses the reaction N(2)-(1-hydroxy-2-oxopropyl)-GDP + H2O = lactate + GDP + H(+). It carries out the reaction N(2)-(1-hydroxy-2-oxopropyl)-GMP + H2O = lactate + GMP + H(+). The enzyme catalyses N(2)-(1-hydroxy-2-oxoethyl)-dGTP + H2O = dGTP + glycolate + H(+). The catalysed reaction is N(2)-(1-hydroxy-2-oxoethyl)-GTP + H2O = glycolate + GTP + H(+). It catalyses the reaction N(2)-(1-hydroxy-2-oxoethyl)-GDP + H2O = glycolate + GDP + H(+). It carries out the reaction N(2)-(1-hydroxy-2-oxoethyl)-GMP + H2O = glycolate + GMP + H(+). The enzyme catalyses an N(2)-(1-hydroxy-2-oxopropyl)-guanosine in RNA + H2O = a guanosine in RNA + lactate + H(+). The catalysed reaction is an N(2)-(1-hydroxy-2-oxopropyl)-2'-deoxyguanosine in DNA + H2O = a 2'-deoxyguanosine in DNA + lactate + H(+). It catalyses the reaction an N(2)-(1-hydroxy-2-oxoethyl)-guanosine in RNA + H2O = a guanosine in RNA + glycolate + H(+). It carries out the reaction an N(2)-(1-hydroxy-2-oxoethyl)-2'-deoxyguanosine in DNA + H2O = a 2'-deoxyguanosine in DNA + glycolate + H(+). Its function is as follows. Protein and nucleotide deglycase that catalyzes the deglycation of the Maillard adducts formed between amino groups of proteins or nucleotides and reactive carbonyl groups of glyoxals. Thus, functions as a protein deglycase that repairs methylglyoxal- and glyoxal-glycated proteins, and releases repaired proteins and lactate or glycolate, respectively. Deglycates cysteine, arginine and lysine residues in proteins, and thus reactivates these proteins by reversing glycation by glyoxals. Acts on early glycation intermediates (hemithioacetals and aminocarbinols), preventing the formation of Schiff bases and advanced glycation endproducts (AGE). Also functions as a nucleotide deglycase able to repair glycated guanine in the free nucleotide pool (GTP, GDP, GMP, dGTP) and in DNA and RNA. Is thus involved in a major nucleotide repair system named guanine glycation repair (GG repair), dedicated to reversing methylglyoxal and glyoxal damage via nucleotide sanitization and direct nucleic acid repair. Plays an important role in protecting cells from carbonyl stress. In Escherichia coli O157:H7, this protein is Protein/nucleic acid deglycase HchA.